A 451-amino-acid polypeptide reads, in one-letter code: MRECISIHVGQAGAQMGNACWELYCLEHGIQPDGQMPSDKTIGGGDDSFNTFFCETGAGKHVPRAVFVDLEPTVIDEIRTGVYRQLFHPEQLITGKEDAANNYARGHYTIGKEIVDIVLDRIRKLADNCAGLQGFLIFHSFGGGTGSGFTSLLMERLSVDYGKKSKLEFAIYPAPQVATAVVEPYNSILTTHTTLEHSDCAFMVDNEAIYDICRRNLDIERPTYTNLNRLIGQIVSSITASLRFDGALNVDLTEFQTNLVPYPRIHFPLVTYAPVISAEKAYHEQLSVSEITNACFEPANQMVKCDPRHGKYMACCLLYRGDVVPKDVNAAIATIKTKRSIQFVDWCPTGFKVGINYQPPTAVPGGDLAKVSRAVCMLSNTTAIAEAWARLDHKFDLMYAKRAFVHWYVGEGMEEGEFTEAREDLAALEKDYEEVGVDSADAEGEEEGEEY.

Gln11 is a GTP binding site. Lys40 carries the post-translational modification N6-acetyllysine. Residues Glu71, Ser140, Gly144, Thr145, Thr179, Asn206, and Asn228 each contribute to the GTP site. A Mg(2+)-binding site is contributed by Glu71. The active site involves Glu254.

It belongs to the tubulin family. In terms of assembly, dimer of alpha and beta chains. A typical microtubule is a hollow water-filled tube with an outer diameter of 25 nm and an inner diameter of 15 nM. Alpha-beta heterodimers associate head-to-tail to form protofilaments running lengthwise along the microtubule wall with the beta-tubulin subunit facing the microtubule plus end conferring a structural polarity. Microtubules usually have 13 protofilaments but different protofilament numbers can be found in some organisms and specialized cells. Mg(2+) is required as a cofactor. Post-translationally, undergoes a tyrosination/detyrosination cycle, the cyclic removal and re-addition of a C-terminal tyrosine residue by the enzymes tubulin tyrosine carboxypeptidase (TTCP) and tubulin tyrosine ligase (TTL), respectively. Acetylation of alpha chains at Lys-40 stabilizes microtubules and affects affinity and processivity of microtubule motors. This modification has a role in multiple cellular functions, ranging from cell motility, cell cycle progression or cell differentiation to intracellular trafficking and signaling.

Its subcellular location is the cytoplasm. The protein localises to the cytoskeleton. It carries out the reaction GTP + H2O = GDP + phosphate + H(+). Its function is as follows. Tubulin is the major constituent of microtubules, a cylinder consisting of laterally associated linear protofilaments composed of alpha- and beta-tubulin heterodimers. Microtubules grow by the addition of GTP-tubulin dimers to the microtubule end, where a stabilizing cap forms. Below the cap, tubulin dimers are in GDP-bound state, owing to GTPase activity of alpha-tubulin. This Homarus americanus (American lobster) protein is Tubulin alpha-3 chain.